Here is a 249-residue protein sequence, read N- to C-terminus: DNA repair protein RecO (249 aa).

Belongs to the RecO family.

Its function is as follows. Involved in DNA repair and RecF pathway recombination. The chain is DNA repair protein RecO from Exiguobacterium sibiricum (strain DSM 17290 / CCUG 55495 / CIP 109462 / JCM 13490 / 255-15).